We begin with the raw amino-acid sequence, 435 residues long: Proline and serine-rich protein 2 (435 aa).

Over residues 1–10 (MPVTHRKSDA) the composition is skewed to basic and acidic residues. Residues 1-22 (MPVTHRKSDASDMNSDTSPSCR) are disordered. The residue at position 8 (Ser8) is a Phosphoserine. Residues 11-20 (SDMNSDTSPS) show a composition bias toward polar residues. Residue Ser43 is modified to Phosphoserine. Thr45 bears the Phosphothreonine mark. Composition is skewed to low complexity over residues 92–102 (PSLEESTSSPS) and 113–126 (PAPG…LPEG). 2 disordered regions span residues 92–276 (PSLE…RAAV) and 295–420 (AFPA…SEEA). At Thr146 the chain carries Phosphothreonine. Pro residues predominate over residues 146–169 (TPPPPDPPAPETLLAPPPLPSTPD). Ser166 is modified (phosphoserine). The residue at position 167 (Thr167) is a Phosphothreonine. 3 positions are modified to phosphoserine: Ser179, Ser212, and Ser215. Residues 228 to 237 (PAARGPRSGD) are compositionally biased toward low complexity. Position 252 is an asymmetric dimethylarginine; alternate (Arg252). Position 252 is an omega-N-methylarginine; alternate (Arg252). A compositionally biased stretch (gly residues) spans 302 to 311 (AGEGAPGGGS). Ser312 is modified (phosphoserine). Arg320 carries the post-translational modification Omega-N-methylarginine; alternate. Arg320 carries the post-translational modification Dimethylated arginine; alternate. Arg378 is modified (omega-N-methylarginine). Ser400 carries the phosphoserine modification. Arg414 is modified (omega-N-methylarginine).

The polypeptide is Proline and serine-rich protein 2 (PROSER2) (Homo sapiens (Human)).